We begin with the raw amino-acid sequence, 245 residues long: DNA polymerase sliding clamp 1 (245 aa).

Belongs to the PCNA family. Homotrimer. The subunits circularize to form a toroid; DNA passes through its center. Replication factor C (RFC) is required to load the toroid on the DNA.

In terms of biological role, sliding clamp subunit that acts as a moving platform for DNA processing. Responsible for tethering the catalytic subunit of DNA polymerase and other proteins to DNA during high-speed replication. The sequence is that of DNA polymerase sliding clamp 1 from Sulfurisphaera ohwakuensis.